The sequence spans 147 residues: UPF0735 ACT domain-containing protein YszB (147 aa).

The ACT domain maps to 70–145 (TLFFHLEDRS…FVEKVEILGS (76 aa)).

Belongs to the UPF0735 family.

This chain is UPF0735 ACT domain-containing protein YszB (yszB), found in Bacillus subtilis (strain 168).